Consider the following 2363-residue polypeptide: Spectrin beta chain, non-erythrocytic 1 (2363 aa).

T2 carries the N-acetylthreonine modification. The actin-binding stretch occupies residues 2-275 (TTTVATDYDN…IITYVVTYYH (274 aa)). Phosphoserine occurs at positions 14 and 36. 2 Calponin-homology (CH) domains span residues 54 to 158 (AVQK…LRFQ) and 173 to 278 (KSAK…HYFS). K90 carries the N6-acetyllysine modification. At S228 the chain carries Phosphoserine. 15 Spectrin repeats span residues 303-411 (MIEK…LALR), 423-525 (LARR…QRLE), 530-636 (LQKI…RLEE), 639-742 (RLWK…RLEE), 745-847 (LLHQ…ALQD), 850-952 (ALYK…DALL), 957-1060 (IQNY…SLGE), 1063-1166 (KLQQ…NLLS), 1170-1259 (AYQQ…RHRK), 1276-1376 (DLQK…AQRL), 1381-1482 (KAEL…HNLL), 1486-1590 (EIHQ…RLEE), 1592-1696 (HKAQ…KLDE), 1698-1801 (HRLF…TQIL), and 1805-1907 (YELH…RVRL). Phosphoserine is present on residues S817, S903, S1057, S1076, S1079, and S1237. Phosphoserine occurs at positions 1388, 1447, and 1557. Residues 1563 to 2093 (IRQRLADLKQ…LLEVRRQQEE (531 aa)) form an interaction with ANK2 region. At Y1805 the chain carries Phosphotyrosine. Residues K1815, K1913, and K1989 each carry the N6-acetyllysine modification. Spectrin repeat units follow at residues 1914–2014 (FRFF…EWLR) and 2018–2097 (EVHQ…EERK). Residues 2089–2193 (RQQEEEERKR…AATLPARTLE (105 aa)) form a disordered region. Phosphoserine is present on residues S2102, S2127, and S2137. Residues 2115 to 2130 (SQQWDTSKGDQVSQNG) are compositionally biased toward polar residues. T2146 is subject to Phosphothreonine. S2147 carries the post-translational modification Phosphoserine. The tract at residues 2148-2176 (EMVNGAAEQRTSSKESSPVPSPTLDRKAK) is mediates interaction with CAMSAP1. T2158 carries the post-translational modification Phosphothreonine. S2159, S2160, S2163, S2164, and S2168 each carry phosphoserine. T2170 is subject to Phosphothreonine. A Phosphoserine modification is found at S2183. A phosphothreonine mark is found at T2186 and T2194. A PH domain is found at 2196–2306 (AAQMEGFLNR…WIQAISSAIS (111 aa)). Residues 2308–2363 (DKHDTSASTQSTPASSRAQTLPTSVVTITSESSPGKREKDKEKDKEKRFSLFGKKK) are disordered. Residues S2313 and S2318 each carry the phosphoserine modification. A compositionally biased stretch (low complexity) spans 2313-2327 (SASTQSTPASSRAQT). The residue at position 2319 (T2319) is a Phosphothreonine. O-linked (GlcNAc) serine glycosylation is present at S2323. At T2327 the chain carries Phosphothreonine. Residues 2328-2340 (LPTSVVTITSESS) show a composition bias toward polar residues. Residues S2339 and S2340 each carry the phosphoserine modification. Over residues 2341-2356 (PGKREKDKEKDKEKRF) the composition is skewed to basic and acidic residues.

It belongs to the spectrin family. As to quaternary structure, interacts with ANK2. Interacts with CPNE4 (via VWFA domain). Like erythrocyte spectrin, the spectrin-like proteins are capable to form dimers which can further associate to tetramers. Interacts with CAMSAP1. Can form heterodimers with SPTAN1. Isoform 2 is present in brain, heart, kidney and liver (at protein level).

Its subcellular location is the cytoplasm. It localises to the cytoskeleton. The protein resides in the endomembrane system. It is found in the myofibril. The protein localises to the sarcomere. Its subcellular location is the m line. It localises to the cytosol. The protein resides in the cell membrane. In terms of biological role, fodrin, which seems to be involved in secretion, interacts with calmodulin in a calcium-dependent manner and is thus candidate for the calcium-dependent movement of the cytoskeleton at the membrane. Plays a critical role in central nervous system development and function. In Mus musculus (Mouse), this protein is Spectrin beta chain, non-erythrocytic 1 (Sptbn1).